A 450-amino-acid chain; its full sequence is Salicylate synthase (450 aa).

Glu-252 serves as the catalytic Proton donor. 270–271 lines the substrate pocket; sequence GT. Glu-297 contacts Mg(2+). Residues Tyr-385, Arg-405, and 419–421 each bind substrate; that span reads GAG. Residues Glu-431 and Glu-434 each contribute to the Mg(2+) site. Lys-438 contacts substrate.

Belongs to the anthranilate synthase component I family. Salicylate synthase subfamily. Monomer. Mg(2+) serves as cofactor.

The enzyme catalyses chorismate = isochorismate. It carries out the reaction isochorismate = salicylate + pyruvate. It catalyses the reaction chorismate = prephenate. It participates in siderophore biosynthesis; mycobactin biosynthesis. Involved in the incorporation of salicylate into the virulence-conferring salicylate-based siderophore mycobactin. Catalyzes the initial conversion of chorismate to yield the intermediate isochorismate (isochorismate synthase activity), and the subsequent elimination of the enolpyruvyl side chain in a lyase reaction to give salicylate (isochorismate pyruvate-lyase activity). In the absence of magnesium, MbtI displays a chorismate mutase activity and converts chorismate to prephenate. This Mycobacterium bovis (strain ATCC BAA-935 / AF2122/97) protein is Salicylate synthase (mbtI).